The chain runs to 347 residues: MKDKELSQRKNDHLDIVLHPERAKQTIRTGFEQWRFEHCALPELALDDIDLSTRLFGRVMKAPLLISSMTGGARRASDINRHLAEAAQTLGLAMGVGSQRVALESEDNWGLTGELRRYAPDIPLLANLGAAQIGSLQGLDYARRAVEMVEADALIIHLNPLQEALQTGGDRDWRGVLAAIKRVVNALSVPVVVKEVGAGLSVPVARQLAEAGVTMLDVAGAGGTSWAAVEGERAASDHARSVAMAFADWGIPTAQALRQIHQAFPSMPLIASGGIRDGIDTAKALAMGASLVGQAAAVLGSATTSTSAVLDHFAVVIEQLRVACFCTGSASLSALREARLARVGDEE.

9-10 (RK) contributes to the substrate binding site. Residues Ser-67, 68 to 70 (SMT), Ser-98, and Asn-127 each bind FMN. 98–100 (SQR) contacts substrate. Gln-162 contacts substrate. Glu-163 is a binding site for Mg(2+). Residues Lys-194, Thr-224, 274–276 (GIR), and 295–296 (AA) contribute to the FMN site.

It belongs to the IPP isomerase type 2 family. Homooctamer. Dimer of tetramers. The cofactor is FMN. It depends on NADPH as a cofactor. Requires Mg(2+) as cofactor.

It localises to the cytoplasm. It carries out the reaction isopentenyl diphosphate = dimethylallyl diphosphate. Its function is as follows. Involved in the biosynthesis of isoprenoids. Catalyzes the 1,3-allylic rearrangement of the homoallylic substrate isopentenyl (IPP) to its allylic isomer, dimethylallyl diphosphate (DMAPP). The chain is Isopentenyl-diphosphate delta-isomerase from Cronobacter sakazakii (strain ATCC BAA-894) (Enterobacter sakazakii).